Here is a 278-residue protein sequence, read N- to C-terminus: Orotidine 5'-phosphate decarboxylase (278 aa).

Residues Asp40, 62-64 (KTH), 93-102 (DRKFIDIGNT), Tyr229, and Arg247 contribute to the substrate site. The active-site Proton donor is Lys95.

This sequence belongs to the OMP decarboxylase family.

It catalyses the reaction orotidine 5'-phosphate + H(+) = UMP + CO2. Its pathway is pyrimidine metabolism; UMP biosynthesis via de novo pathway; UMP from orotate: step 2/2. The protein is Orotidine 5'-phosphate decarboxylase (pyrG) of Aspergillus fumigatus (strain ATCC MYA-4609 / CBS 101355 / FGSC A1100 / Af293) (Neosartorya fumigata).